A 500-amino-acid chain; its full sequence is Inner membrane transporter YjeM (500 aa).

The Cytoplasmic segment spans residues 1-7 (MPHTIKK). Residues 8 to 28 (MSLIGLILMIFTSVFGFANSP) form a helical membrane-spanning segment. Residues 29–37 (SAYYLMGYS) lie on the Periplasmic side of the membrane. Residues 38-58 (AIPFYIFSALLFFIPFALMMA) traverse the membrane as a helical segment. At 59-82 (EMGAAYRKEEGGIYSWMNNSVGPR) the chain is on the cytoplasmic side. Residues 83 to 103 (FAFIGTFMWFSSYIIWMVSTS) form a helical membrane-spanning segment. Topologically, residues 104 to 132 (AKVWVPFSTFLYGSDMTQHWRIAGLEPTQ) are periplasmic. A helical transmembrane segment spans residues 133–153 (VVGLLAVAWMILVTVVASKGI). The Cytoplasmic segment spans residues 154–163 (NKIARITAVG). The chain crosses the membrane as a helical span at residues 164–184 (GIAVMCLNLVLLLVSITILLL). Residues 185 to 209 (NGGHFAQDINFLASPNPGYQSGLAM) lie on the Periplasmic side of the membrane. A helical membrane pass occupies residues 210-230 (LSFVVFAIFAYGGIEAVGGLV). Topologically, residues 231–243 (DKTENPEKNFAKG) are cytoplasmic. A helical membrane pass occupies residues 244 to 264 (IVFAAIVISIGYSLAIFLWGV). Topologically, residues 265-319 (STNWQQVLSNGSVNLGNITYVLMKSLGMTLGNALHLSPEASLSLGVWFARITGLS) are periplasmic. The chain crosses the membrane as a helical span at residues 320–340 (MFLAYTGAFFTLCYSPLKAII). The Cytoplasmic portion of the chain corresponds to 341–369 (QGTPKALWPEPMTRLNAMGMPSIAMWMQC). Residues 370–390 (GLVTVFILLVSFGGGTASAFF) traverse the membrane as a helical segment. The Periplasmic portion of the chain corresponds to 391–394 (NKLT). The helical transmembrane segment at 395 to 415 (LMANVSMTLPYLFLALAFPFF) threads the bilayer. The Cytoplasmic portion of the chain corresponds to 416 to 433 (KARQDLDRPFVIFKTHLS). A helical transmembrane segment spans residues 434–454 (AMIATVVVVLVVTFANVFTII). The Periplasmic segment spans residues 455-462 (QPVVEAGD). Residues 463–483 (WDSTLWMIGGPVFFSLLAMAI) form a helical membrane-spanning segment. Over 484 to 500 (YQNYCSRVAKNPQWAVE) the chain is Cytoplasmic.

Belongs to the amino acid-polyamine-organocation (APC) superfamily.

It localises to the cell inner membrane. The chain is Inner membrane transporter YjeM (yjeM) from Escherichia coli (strain K12).